Reading from the N-terminus, the 336-residue chain is MSRVTLSRYLIEQTRSNNTPADLRFLIEVVARACKEISHAVSKGALGGVLGSMGTENVQGEVQKKLDVISNEILLEANEWGGHLAGMASEEMDNAYQIPGKYPKGAYLLVFDPLDGSSNIDINAPVGTIFSVLRCPNEYLSQNEALNEKAFLQPGTEQVAAGYAIYGPQTMLVLTLGDGVKGFTLDREMGSFVLTHEDIKIPESTQEFAINMSNQRHWEAPVQRYVNELLAGEEGPLKKNYNMRWVAAMVADVHRILTRGGLFMYPRDSREPSKPGKLRLMYEANPMSFLVEQAGGASTDGHQRILDIQPEGLHQRVAVYLGSKEEVERATAYHKE.

The Mg(2+) site is built by Glu90, Asp112, Leu114, and Asp115. Substrate contacts are provided by residues 115–118, Asn211, and Lys277; that span reads DGSS. Glu283 contributes to the Mg(2+) binding site.

This sequence belongs to the FBPase class 1 family. As to quaternary structure, homotetramer. It depends on Mg(2+) as a cofactor.

The protein localises to the cytoplasm. The enzyme catalyses beta-D-fructose 1,6-bisphosphate + H2O = beta-D-fructose 6-phosphate + phosphate. The protein operates within carbohydrate biosynthesis; gluconeogenesis. The polypeptide is Fructose-1,6-bisphosphatase class 1 (Pseudomonas savastanoi pv. phaseolicola (strain 1448A / Race 6) (Pseudomonas syringae pv. phaseolicola (strain 1448A / Race 6))).